The primary structure comprises 307 residues: 4-diphosphocytidyl-2-C-methyl-D-erythritol kinase (307 aa).

Lys16 is a catalytic residue. 101 to 111 (PVAGGMAGGSA) contacts ATP. The active site involves Asp143.

This sequence belongs to the GHMP kinase family. IspE subfamily.

It carries out the reaction 4-CDP-2-C-methyl-D-erythritol + ATP = 4-CDP-2-C-methyl-D-erythritol 2-phosphate + ADP + H(+). The protein operates within isoprenoid biosynthesis; isopentenyl diphosphate biosynthesis via DXP pathway; isopentenyl diphosphate from 1-deoxy-D-xylulose 5-phosphate: step 3/6. Its function is as follows. Catalyzes the phosphorylation of the position 2 hydroxy group of 4-diphosphocytidyl-2C-methyl-D-erythritol. In Nocardia farcinica (strain IFM 10152), this protein is 4-diphosphocytidyl-2-C-methyl-D-erythritol kinase.